Consider the following 459-residue polypeptide: Putrescine aminotransferase (459 aa).

Residues 150-151 and Gln274 each bind pyridoxal 5'-phosphate; that span reads GT. Lys300 is modified (N6-(pyridoxal phosphate)lysine). Residue Thr332 participates in pyridoxal 5'-phosphate binding.

The protein belongs to the class-III pyridoxal-phosphate-dependent aminotransferase family. Putrescine aminotransferase subfamily. Pyridoxal 5'-phosphate serves as cofactor.

The enzyme catalyses an alkane-alpha,omega-diamine + 2-oxoglutarate = an omega-aminoaldehyde + L-glutamate. It catalyses the reaction putrescine + 2-oxoglutarate = 1-pyrroline + L-glutamate + H2O. The catalysed reaction is cadaverine + 2-oxoglutarate = 5-aminopentanal + L-glutamate. It participates in amine and polyamine degradation; putrescine degradation; 4-aminobutanal from putrescine (transaminase route): step 1/1. Functionally, catalyzes the aminotransferase reaction from putrescine to 2-oxoglutarate, leading to glutamate and 4-aminobutanal, which spontaneously cyclizes to form 1-pyrroline. This is the first step in one of two pathways for putrescine degradation, where putrescine is converted into 4-aminobutanoate (gamma-aminobutyrate or GABA) via 4-aminobutanal. Also functions as a cadaverine transaminase in a a L-lysine degradation pathway to succinate that proceeds via cadaverine, glutarate and L-2-hydroxyglutarate. The sequence is that of Putrescine aminotransferase from Escherichia coli (strain ATCC 8739 / DSM 1576 / NBRC 3972 / NCIMB 8545 / WDCM 00012 / Crooks).